Reading from the N-terminus, the 115-residue chain is Small nuclear ribonucleoprotein Sm D2 (115 aa).

Positions 30–115 (LSVLQQAVKN…VVLVVRIPSA (86 aa)) constitute a Sm domain.

Belongs to the snRNP core protein family. As to quaternary structure, belongs to the 40S cdc5-associated complex (or cwf complex), a spliceosome sub-complex reminiscent of a late-stage spliceosome composed of the U2, U5 and U6 snRNAs and at least brr2, cdc5, cwf2/prp3, cwf3/syf1, cwf4/syf3, cwf5/ecm2, spp42/cwf6, cwf7/spf27, cwf8, cwf9, cwf10, cwf11, cwf12, prp45/cwf13, cwf14, cwf15, cwf16, cwf17, cwf18, cwf19, cwf20, cwf21, cwf22, cwf23, cwf24, cwf25, cwf26, cyp7/cwf27, cwf28, cwf29/ist3, lea1, msl1, prp5/cwf1, prp10, prp12/sap130, prp17, prp22, sap61, sap62, sap114, sap145, slu7, smb1, smd1, smd3, smf1, smg1 and syf2.

The protein localises to the nucleus. It is found in the cytoplasm. Its subcellular location is the cytosol. Plays a role in pre-mRNA splicing as a core component of the spliceosomal U1, U2, U4 and U5 small nuclear ribonucleoproteins (snRNPs), the building blocks of the spliceosome. The polypeptide is Small nuclear ribonucleoprotein Sm D2 (smd2) (Schizosaccharomyces pombe (strain 972 / ATCC 24843) (Fission yeast)).